The sequence spans 119 residues: Beta-2-microglobulin (119 aa).

The N-terminal stretch at methionine 1–alanine 20 is a signal peptide. The 90-residue stretch at proline 25 to lysine 114 folds into the Ig-like C1-type domain. A disulfide bridge connects residues cysteine 45 and cysteine 100.

The protein belongs to the beta-2-microglobulin family. In terms of assembly, heterodimer of an alpha chain and a beta chain. Beta-2-microglobulin is the beta-chain of major histocompatibility complex class I molecules.

It is found in the secreted. Its function is as follows. Component of the class I major histocompatibility complex (MHC). Involved in the presentation of peptide antigens to the immune system. In Cebuella pygmaea (Pygmy marmoset), this protein is Beta-2-microglobulin (B2M).